The chain runs to 144 residues: Large ribosomal subunit protein uL15 (144 aa).

The interval 1-49 (MRLNTLSPAAGSKSAPKRVGRGIGSGLGKTAGRGHKGQKSRSGGGVRVG) is disordered. Residues 21-31 (RGIGSGLGKTA) show a composition bias toward gly residues.

It belongs to the universal ribosomal protein uL15 family. Part of the 50S ribosomal subunit.

Its function is as follows. Binds to the 23S rRNA. This is Large ribosomal subunit protein uL15 from Shewanella denitrificans (strain OS217 / ATCC BAA-1090 / DSM 15013).